The sequence spans 302 residues: Rab effector Noc2 (302 aa).

Positions 41 to 158 (QRRSQCLSPG…KRSGAWFYKG (118 aa)) constitute a RabBD domain. Residues 89–146 (GNGLSQCLLCGEVLGFLGSSSVFCKDCRKKVCTKCGIEASPGQKRPLWLCKICSEQRE) form an FYVE-type zinc finger. The Zn(2+) site is built by Cys-95, Cys-98, Cys-112, Cys-115, Cys-120, Cys-123, Cys-138, and Cys-141. The segment at 174–302 (DPHFRPLPVE…KRHTWATPRY (129 aa)) is disordered. Over residues 185 to 197 (TETQPPSAETSRV) the composition is skewed to polar residues. The residue at position 248 (Ser-248) is a Phosphoserine. Residues 258–269 (SHLSGSQSSLGS) show a composition bias toward low complexity.

Recruited to dense-core vesicles through specific interaction with RAB27A in endocrine cells. Interacts with RAB3A, RAB3B, RAB3C and RAB3D. Interacts with ZYX. Highly expressed in pancreatic islets. High to moderate expression in adrenal gland, pituitary gland and ovary.

The protein localises to the cytoplasm. The protein resides in the cytoplasmic vesicle. It is found in the secretory vesicle membrane. Rab GTPase effector involved in the late steps of regulated exocytosis, both in endocrine and exocrine cells. Regulates the exocytosis of dense-core vesicles in neuroendocrine cells through interaction with RAB27A. Acts as a potential RAB3B effector protein in epithelial cells. The sequence is that of Rab effector Noc2 (Rph3al) from Mus musculus (Mouse).